Here is a 776-residue protein sequence, read N- to C-terminus: 5-methyltetrahydropteroyltriglutamate--homocysteine methyltransferase (776 aa).

5-methyltetrahydropteroyltri-L-glutamate contacts are provided by residues 16-19 (RELK) and Lys-112. L-homocysteine-binding positions include 432–434 (IGS) and Glu-485. L-methionine-binding positions include 432–434 (IGS) and Glu-485. Residues 516–517 (RC) and Trp-562 contribute to the 5-methyltetrahydropteroyltri-L-glutamate site. Residue Asp-600 coordinates L-homocysteine. L-methionine is bound at residue Asp-600. Glu-606 provides a ligand contact to 5-methyltetrahydropteroyltri-L-glutamate. Residues His-642, Cys-644, and Glu-666 each coordinate Zn(2+). The active-site Proton donor is His-695. Cys-727 is a Zn(2+) binding site. Residues 755–776 (HAGAVHAGTPATRAEHAESALA) are disordered. The segment covering 767 to 776 (RAEHAESALA) has biased composition (basic and acidic residues).

Belongs to the vitamin-B12 independent methionine synthase family. The cofactor is Zn(2+).

The catalysed reaction is 5-methyltetrahydropteroyltri-L-glutamate + L-homocysteine = tetrahydropteroyltri-L-glutamate + L-methionine. Its pathway is amino-acid biosynthesis; L-methionine biosynthesis via de novo pathway; L-methionine from L-homocysteine (MetE route): step 1/1. Catalyzes the transfer of a methyl group from 5-methyltetrahydrofolate to homocysteine resulting in methionine formation. The protein is 5-methyltetrahydropteroyltriglutamate--homocysteine methyltransferase of Ralstonia nicotianae (strain ATCC BAA-1114 / GMI1000) (Ralstonia solanacearum).